The sequence spans 265 residues: Hydroxyethylthiazole kinase (265 aa).

M43 is a substrate binding site. Positions 118 and 165 each coordinate ATP. G192 is a binding site for substrate.

This sequence belongs to the Thz kinase family. Mg(2+) serves as cofactor.

The catalysed reaction is 5-(2-hydroxyethyl)-4-methylthiazole + ATP = 4-methyl-5-(2-phosphooxyethyl)-thiazole + ADP + H(+). It functions in the pathway cofactor biosynthesis; thiamine diphosphate biosynthesis; 4-methyl-5-(2-phosphoethyl)-thiazole from 5-(2-hydroxyethyl)-4-methylthiazole: step 1/1. Catalyzes the phosphorylation of the hydroxyl group of 4-methyl-5-beta-hydroxyethylthiazole (THZ). In Pyrococcus abyssi (strain GE5 / Orsay), this protein is Hydroxyethylthiazole kinase.